The chain runs to 294 residues: Phosphoribosylaminoimidazole-succinocarboxamide synthase (294 aa).

It belongs to the SAICAR synthetase family.

It carries out the reaction 5-amino-1-(5-phospho-D-ribosyl)imidazole-4-carboxylate + L-aspartate + ATP = (2S)-2-[5-amino-1-(5-phospho-beta-D-ribosyl)imidazole-4-carboxamido]succinate + ADP + phosphate + 2 H(+). The protein operates within purine metabolism; IMP biosynthesis via de novo pathway; 5-amino-1-(5-phospho-D-ribosyl)imidazole-4-carboxamide from 5-amino-1-(5-phospho-D-ribosyl)imidazole-4-carboxylate: step 1/2. This Rhodococcus opacus (strain B4) protein is Phosphoribosylaminoimidazole-succinocarboxamide synthase.